Reading from the N-terminus, the 819-residue chain is Protein kinase C-binding protein NELL2 (819 aa).

The signal sequence occupies residues 1 to 24; that stretch reads MHAMESRVLLRTFCVILGLGAVWG. Asn-56, Asn-228, Asn-296, and Asn-301 each carry an N-linked (GlcNAc...) asparagine glycan. The region spanning 67 to 231 is the Laminin G-like domain; sequence PRSIKASTAT…AQCPDLNRTC (165 aa). A VWFC 1 domain is found at 275–334; it reads RTCTVKGTTYRESESWTDGCKNCTCLNGTIQCETLVCPAPDCPPKSAPAYVDGKCCKECK. In terms of domain architecture, EGF-like 1 spans 400–442; the sequence is GYDFCSEKHTCMENSVCRNLNDRAVCSCRDGFRALREDNAYCE. 3 disulfide bridges follow: Cys-404–Cys-416, Cys-410–Cys-425, and Cys-427–Cys-441. Residues Asp-443, Ile-444, and Glu-446 each coordinate Ca(2+). Positions 443–484 constitute an EGF-like 2; calcium-binding domain; sequence DIDECAEGRHYCRENTMCVNTPGSFMCICKTGYIRIDDYSCT. Disulfide bonds link Cys-447–Cys-460, Cys-454–Cys-469, Cys-471–Cys-483, Cys-489–Cys-502, Cys-496–Cys-511, Cys-513–Cys-524, Cys-528–Cys-538, Cys-532–Cys-544, and Cys-546–Cys-555. Positions 462, 463, and 466 each coordinate Ca(2+). The EGF-like 3; calcium-binding domain occupies 485–525; the sequence is EHDECLTNQHNCDENALCFNTVGGHNCVCKPGYTGNGTTCK. The N-linked (GlcNAc...) asparagine glycan is linked to Asn-520. One can recognise an EGF-like 4 domain in the interval 526 to 556; sequence AFCKDGCRNGGACIAANVCACPQGFTGPSCE. Residue Thr-551 is glycosylated (O-linked (GlcNAc...) threonine). Ca(2+) contacts are provided by Asp-558, Ile-559, and Glu-561. Residues 558–604 enclose the EGF-like 5; calcium-binding domain; that stretch reads DIDECSEGFVQCDSRANCINLPGWYHCECRDGYHDNGMFAPGGESCE. Disulfide bonds link Cys-562–Cys-575, Cys-569–Cys-584, and Cys-586–Cys-603. Residues Asn-577, Leu-578, and Trp-581 each contribute to the Ca(2+) site. Ca(2+) contacts are provided by Asp-605, Ile-606, and Glu-608. In terms of domain architecture, EGF-like 6; calcium-binding spans 605–640; the sequence is DIDECGTGRHSCTNDTICFNLDGGYDCRCPHGKNCT. Cystine bridges form between Cys-609-Cys-622, Cys-616-Cys-631, and Cys-633-Cys-639. The N-linked (GlcNAc...) asparagine glycan is linked to Asn-618. Ca(2+) is bound by residues Asn-624, Leu-625, and Gly-628. An N-linked (GlcNAc...) asparagine glycan is attached at Asn-638. Residues 701 to 759 form the VWFC 2 domain; sequence SQCLHQNGETVYNSGDTWVQDCRQCRCLQGEVDCWPLACPEVECEFSVLPENECCPRCV.

Homotrimer. Interacts with NICOL1; this interaction triggers epididymal differentiation. Interacts (via EGF domains) with ROBO3 (via FN domains); binding to ROBO3 induces repulsive guidance cue for commissural axons. As to expression, expressed in brain and testis but not in epididymis. Expressed in regions flanking the commissural axon trajectory, including the ventral horn.

The protein resides in the secreted. Its function is as follows. Plays multiple roles in neural tissues, regulates neuronal proliferation, survival, differentiation, polarization, as well as axon guidance and synaptic functions. Plays an important role in axon development during neuronal differentiation through the MAPK intracellular signaling pathway. Via binding to its receptor ROBO3, plays a role in axon guidance, functioning as a repulsive axon guidance cue that contributes to commissural axon guidance to the midline. Required for neuron survival through the modulation of MAPK signaling pathways too. Involved in the regulation of hypothalamic GNRH secretion and the control of puberty. Functionally, epididymal-secreted protein that signals through a ROS1-pathway to regulate the epididymal initial segment (IS) maturation, sperm maturation and male fertility. This chain is Protein kinase C-binding protein NELL2, found in Mus musculus (Mouse).